The sequence spans 84 residues: U7-ctenitoxin-Pn1a (84 aa).

Positions 1–17 are cleaved as a signal peptide; the sequence is MKLCILLVVLLITVVRA. A propeptide spanning residues 18–38 is cleaved from the precursor; it reads EEDILENEAEDISPAIKERSA. 4 disulfide bridges follow: Cys-41/Cys-56, Cys-48/Cys-61, Cys-55/Cys-78, and Cys-63/Cys-76.

Expressed by the venom gland.

The protein localises to the secreted. In terms of biological role, antagonist of L-type calcium channels (Cav1/CACNA1). Causes paralysis in the posterior limbs and gradual decreases in movement and aggression during 24 hours at dose levels of 5 ug per mouse. This Phoneutria nigriventer (Brazilian armed spider) protein is U7-ctenitoxin-Pn1a.